We begin with the raw amino-acid sequence, 278 residues long: MTVLHSVDFFPSGNASVAIEPRLPQADFPEHHHDFHEIVIVEHGTGIHVFNGQPYTITGGTVCFVRDHDRHLYEHTDNLCLTNVLYRSPDRFQFLAGLNQLLPQEQDGQYPSHWRVNYSVLQQVRQLVAQMEQQEGENDLPSTASREILFMQLLLLLRKSSLQENLENSASRLNLLLAWLEDHFADEVNWDAVADQFSLSLRTLHRQLKQQTGLTPQRYLNRLRLMKARHLLRHSEASVTDIAYRCGFSDSNHFSTLFRREFNWSPRDIRQGRDGFLQ.

Residues N174–G272 form the HTH araC/xylS-type domain. 2 consecutive DNA-binding regions (H-T-H motif) follow at residues D191 to T212 and V239 to F262.

Binds DNA as a dimer.

It is found in the cytoplasm. Activates expression of the rhaBAD and rhaT operons. In Escherichia coli O6:H1 (strain CFT073 / ATCC 700928 / UPEC), this protein is HTH-type transcriptional activator RhaS.